The sequence spans 1031 residues: Telomerase reverse transcriptase (1031 aa).

The Reverse transcriptase domain maps to 498–852; the sequence is KEVEEWKKSL…DYCDWIGISI (355 aa). Residues aspartate 603, aspartate 781, and aspartate 782 each coordinate Mg(2+).

It belongs to the reverse transcriptase family. Telomerase subfamily. Component of the telomerase holoenzyme complex composed minimally of the catalytic subunit p123 and the telomerase RNA template component.

It is found in the nucleus. The protein localises to the chromosome. It localises to the telomere. It catalyses the reaction DNA(n) + a 2'-deoxyribonucleoside 5'-triphosphate = DNA(n+1) + diphosphate. Its function is as follows. Telomerase is a ribonucleoprotein enzyme essential for the replication of chromosome termini in most eukaryotes. It elongates telomeres. It is a reverse transcriptase that adds simple sequence repeats to chromosome ends by copying a template sequence within the RNA component of the enzyme. The chain is Telomerase reverse transcriptase from Euplotes aediculatus (Ciliate).